The chain runs to 362 residues: Transcriptional repressor PifC (362 aa).

Transcription repression of its own gene by binding to the PIF operator (pifO) and replication initiation from the primary origin (ori-1). Transcriptional repressor of the pifA and pifB. This Escherichia coli (strain K12) protein is Transcriptional repressor PifC (pifC).